Here is a 725-residue protein sequence, read N- to C-terminus: MDAFKLLTRSTKFKTGPSSSSASLPSTGKAENPQLFRNSEAEKLLEEQKNGKKRKRGSAADEPEEREPNLDFFSSNKGSSKKVVKAEEAPSDEERGSGSEDEDEMDEVQRRTILNSHKIKVTDMRELEEIQPVQAQGEEEPKKKKKKRKQKEEPAQTLTKKEQKKARRLFPRPLVSFKELRTQYKISRRLAENITEQGFTVPTEVQLGTLPLLLGDRTIGQSKTEEPVEPDLLVVAPTGSGKTLSFLIPVINKIVRHHHGQQEERGIFAVVVAPTKELASQIVNEGRKLVSGTGVKITLMKKGMQVVEREDDDEDVLDEGSSESSESEDDEKTTEKKSKGKAPVTKSDILVTTPLQLVNALSANKTKPMATLPLVRNIVLDEADVLLDPLFREQTLDIWRACTHPELRASLWSATMGSSIEDLAKSTIKERKDASSLTKSYPLYRLVVGLKDSAIPNIQHKLVYAATEQGKLLGLRQLLHPAAAAASDIRLRPPFLIFTQTIPRAVALHSELRYDIPPEAGGSSRIAVLHSDLSDGQRSEIMKNFRKGEIWILVTTDLLARGIDFRGINGVVNYDIPNSAAVYVHRVGRTGRAGREGGVAVTYYTKEDIPYVKSIANVIDVSEKLRGTEGEKSVQKWLLDSLPDLSKKDKKELKKHGVRARQTNLKSVADDKQQRKTRISTKSGFERRMENKKKGAIAASRNRKLQGPSGAEPDSGDDGWGGIQE.

The interval 1–165 (MDAFKLLTRS…QTLTKKEQKK (165 aa)) is disordered. A compositionally biased stretch (low complexity) spans 14 to 30 (KTGPSSSSASLPSTGKA). Basic and acidic residues-rich tracts occupy residues 39–50 (SEAEKLLEEQKN) and 84–98 (VKAEEAPSDEERGSG). A Q motif motif is present at residues 179–207 (ELRTQYKISRRLAENITEQGFTVPTEVQL). The Helicase ATP-binding domain occupies 223–434 (KTEEPVEPDL…KSTIKERKDA (212 aa)). ATP is bound at residue 236–243 (APTGSGKT). Positions 307–344 (VEREDDDEDVLDEGSSESSESEDDEKTTEKKSKGKAPV) are disordered. The span at 309 to 332 (REDDDEDVLDEGSSESSESEDDEK) shows a compositional bias: acidic residues. The DEAD box signature appears at 381–384 (DEAD). In terms of domain architecture, Helicase C-terminal spans 474–642 (GLRQLLHPAA…SVQKWLLDSL (169 aa)). The tract at residues 649–725 (DKKELKKHGV…GDDGWGGIQE (77 aa)) is disordered. A compositionally biased stretch (basic and acidic residues) spans 684–693 (GFERRMENKK).

The protein belongs to the DEAD box helicase family. DDX52/ROK1 subfamily. In terms of assembly, interacts with the U3 snoRNA and is associated with the 90S and 40S pre-ribosomes.

The protein resides in the nucleus. It is found in the nucleolus. The enzyme catalyses ATP + H2O = ADP + phosphate + H(+). Functionally, ATP-dependent RNA helicase involved in 40S ribosomal subunit biogenesis. Required for the processing and cleavage of 35S pre-rRNA at sites A0, A1, and A2, leading to mature 18S rRNA. In Aspergillus oryzae (strain ATCC 42149 / RIB 40) (Yellow koji mold), this protein is ATP-dependent RNA helicase rok1 (rok1).